A 42-amino-acid polypeptide reads, in one-letter code: Capsid protein G8P (42 aa).

Residues Met1–Glu12 lie on the Periplasmic side of the membrane. Residues Ala13 to Ala34 traverse the membrane as a helical segment. Residues Lys35–Gly42 lie on the Cytoplasmic side of the membrane.

Belongs to the inovirus capsid protein family. In terms of assembly, homomultimerizes. There are several thousands of this protein in the phage capsid.

It is found in the virion. The protein resides in the host membrane. In terms of biological role, self assembles to form a helical capsid wrapping up the viral genomic DNA. The capsid displays a filamentous structure with a length of 760-1950 nm and a width of 6-8 nm. The virion assembly and budding take place at the host inner membrane. The polypeptide is Capsid protein G8P (VIII) (Xanthomonas phage phiLf (Bacteriophage phi-Lf)).